The chain runs to 101 residues: Small ribosomal subunit protein uS14 (101 aa).

The protein belongs to the universal ribosomal protein uS14 family. In terms of assembly, part of the 30S ribosomal subunit. Contacts proteins S3 and S10.

Binds 16S rRNA, required for the assembly of 30S particles and may also be responsible for determining the conformation of the 16S rRNA at the A site. This Francisella philomiragia subsp. philomiragia (strain ATCC 25017 / CCUG 19701 / FSC 153 / O#319-036) protein is Small ribosomal subunit protein uS14.